A 249-amino-acid polypeptide reads, in one-letter code: Ciliogenesis and planar polarity effector 2 (249 aa).

The segment at 46-249 (PADVAAYKVF…VIAGLVGGAE (204 aa)) is small GTPase-like. Residues 58 to 65 (GKSGVGKT) and 171 to 174 (TKLD) each bind GTP.

The protein belongs to the small GTPase superfamily. Rab family. Interacts with fuz.

The protein localises to the cytoplasm. It is found in the cytoskeleton. The protein resides in the cilium basal body. Potential effector of the planar cell polarity signaling pathway. Plays a role in targeted membrane trafficking most probably at the level of vesicle fusion with membranes. Involved in cilium biogenesis by regulating the transport of cargo proteins to the basal body and to the apical tips of cilia. More generally involved in exocytosis in secretory cells. This is Ciliogenesis and planar polarity effector 2 from Xenopus laevis (African clawed frog).